Reading from the N-terminus, the 333-residue chain is Adenosine deaminase (333 aa).

Positions 12 and 14 each coordinate Zn(2+). His14, Asp16, and Gly170 together coordinate substrate. His197 is a Zn(2+) binding site. Glu200 (proton donor) is an active-site residue. Asp278 contacts Zn(2+). Asp279 serves as a coordination point for substrate.

The protein belongs to the metallo-dependent hydrolases superfamily. Adenosine and AMP deaminases family. Adenosine deaminase subfamily. Zn(2+) serves as cofactor.

It catalyses the reaction adenosine + H2O + H(+) = inosine + NH4(+). The enzyme catalyses 2'-deoxyadenosine + H2O + H(+) = 2'-deoxyinosine + NH4(+). Functionally, catalyzes the hydrolytic deamination of adenosine and 2-deoxyadenosine. The chain is Adenosine deaminase from Escherichia coli O7:K1 (strain IAI39 / ExPEC).